The chain runs to 399 residues: Protein phosphatase 2C 37 (399 aa).

Positions 104–389 constitute a PPM-type phosphatase domain; that stretch reads KIGTTSVCGR…DNVSVVVVDL (286 aa). Mn(2+) is bound by residues aspartate 142 and glycine 143. Positions 146, 148, 208, and 210 each coordinate Zn(2+). Mn(2+)-binding residues include aspartate 327, aspartate 331, and aspartate 380.

This sequence belongs to the PP2C family. Interacts with AKT2/AKT3. Interacts with ABA-bounded PYR1, PYL1, PYL2, PYL3, PYL4, PYL9 and PYL12, and with free PYL2, PYL3, PYL4 and PYL13. Binds to and inactivates SLAC1 and SRK2E. The inactivation of SRK2E does not require phosphatase activity. Interacts with CBL1, CBL2, CBL3, CBL5, and CBL7, but not CBL4, CBL6, and CBL9. Interacts with RGLG1 and RGLG5. Interacts with KIN10. The cofactor is Mg(2+). Mn(2+) is required as a cofactor. Ubiquitinated by RGLG1 and RGLG5 in response to abscisic acid (ABA). Ubiquitination of PP2CA leads to its degradation by the proteasome. Mostly expressed in seeds and leaves, and, to a lower extent, in roots, stems, and flowers, particularly in siliques. Essentially found in the phloem.

The catalysed reaction is O-phospho-L-seryl-[protein] + H2O = L-seryl-[protein] + phosphate. It catalyses the reaction O-phospho-L-threonyl-[protein] + H2O = L-threonyl-[protein] + phosphate. Its activity is regulated as follows. Repressed by PYR/PYL/RCAR ABA receptors in an ABA-dependent manner. Functionally, major negative regulator of abscisic acid (ABA) responses during seed germination and cold acclimation. Confers insensitivity to ABA. Modulates negatively the AKT2/3 activity, which mediates K(+) transport and membrane polarization during stress situations, probably by dephosphorylation. Prevents stomata closure by inactivating the S-type anion efflux channel SLAC1 and its activator SRK2E. Represses KIN10 activity by the specific dephosphorylation of its T-loop Thr-198, leading to a poststress inactivation of SnRK1 signaling. In Arabidopsis thaliana (Mouse-ear cress), this protein is Protein phosphatase 2C 37 (PP2CA).